A 216-amino-acid polypeptide reads, in one-letter code: Uracil phosphoribosyltransferase (216 aa).

5-phospho-alpha-D-ribose 1-diphosphate is bound by residues Arg-85, Arg-110, and 135–143 (DPMVATGYS). Uracil-binding positions include Ile-200 and 205–207 (GDA). Residue Asp-206 participates in 5-phospho-alpha-D-ribose 1-diphosphate binding.

Belongs to the UPRTase family. Mg(2+) is required as a cofactor.

The enzyme catalyses UMP + diphosphate = 5-phospho-alpha-D-ribose 1-diphosphate + uracil. Its pathway is pyrimidine metabolism; UMP biosynthesis via salvage pathway; UMP from uracil: step 1/1. Allosterically activated by GTP. Functionally, catalyzes the conversion of uracil and 5-phospho-alpha-D-ribose 1-diphosphate (PRPP) to UMP and diphosphate. This chain is Uracil phosphoribosyltransferase, found in Ralstonia pickettii (strain 12J).